Here is a 604-residue protein sequence, read N- to C-terminus: Baculoviral IAP repeat-containing protein 3 (604 aa).

BIR repeat units follow at residues 29–96 (ELYR…CRFV), 169–235 (ENAR…CPFI), and 255–322 (HAAR…CEYL). 4 residues coordinate Zn(2+): cysteine 292, cysteine 295, histidine 312, and cysteine 319. Residues 439–529 (KESNDLLLIR…VLYEHLFVQQ (91 aa)) enclose the CARD domain. The RING-type zinc-finger motif lies at 557–592 (CKVCMDKEVSIVFIPCGHLVVCKDCAPSLRKCPICR).

This sequence belongs to the IAP family. Interacts with PRSS25; interaction inhibits apoptotic suppressor activity. The BIR motifs region interacts with TNF receptor associated factors 1 and 2 (TRAF1 and TRAF2) to form a heteromeric complex, which is then recruited to the tumor necrosis factor receptor 2 (TNFR2). Interaction with TRAF2 is required for ubiquitination of IKBKE, degradation of NFKBIA and activation of NF-kappa-B. Interacts with RIP1, RIP2, RIP3, RIP4 and USP19. In terms of processing, auto-ubiquitinated and degraded by the proteasome in apoptotic cells. Highly expressed in fetal lung, and kidney. In the adult, expression is mainly seen in lymphoid tissues, including spleen, thymus and peripheral blood lymphocytes.

The protein resides in the cytoplasm. The protein localises to the nucleus. It catalyses the reaction S-ubiquitinyl-[E2 ubiquitin-conjugating enzyme]-L-cysteine + [acceptor protein]-L-lysine = [E2 ubiquitin-conjugating enzyme]-L-cysteine + N(6)-ubiquitinyl-[acceptor protein]-L-lysine.. With respect to regulation, USP19 regulates the stability of BIRC3/c-IAP2 by preventing its ubiquitination. Its function is as follows. Multi-functional protein which regulates not only caspases and apoptosis, but also modulates inflammatory signaling and immunity, mitogenic kinase signaling and cell proliferation, as well as cell invasion and metastasis. Acts as an E3 ubiquitin-protein ligase regulating NF-kappa-B signaling and regulates both canonical and non-canonical NF-kappa-B signaling by acting in opposite directions: acts as a positive regulator of the canonical pathway and suppresses constitutive activation of non-canonical NF-kappa-B signaling. The target proteins for its E3 ubiquitin-protein ligase activity include: RIPK1, RIPK2, RIPK3, RIPK4, CASP3, CASP7, CASP8, IKBKE, TRAF1, and BCL10. Acts as an important regulator of innate immune signaling via regulation of Toll-like receptors (TLRs), Nodlike receptors (NLRs) and RIG-I like receptors (RLRs), collectively referred to as pattern recognition receptors (PRRs). Protects cells from spontaneous formation of the ripoptosome, a large multi-protein complex that has the capability to kill cancer cells in a caspase-dependent and caspase-independent manner. Suppresses ripoptosome formation by ubiquitinating RIPK1 and CASP8. This Homo sapiens (Human) protein is Baculoviral IAP repeat-containing protein 3 (BIRC3).